The chain runs to 354 residues: Methylthioribose-1-phosphate isomerase (354 aa).

Asp246 serves as the catalytic Proton donor.

The protein belongs to the eIF-2B alpha/beta/delta subunits family. MtnA subfamily.

The protein resides in the cytoplasm. It localises to the nucleus. It catalyses the reaction 5-(methylsulfanyl)-alpha-D-ribose 1-phosphate = 5-(methylsulfanyl)-D-ribulose 1-phosphate. It functions in the pathway amino-acid biosynthesis; L-methionine biosynthesis via salvage pathway; L-methionine from S-methyl-5-thio-alpha-D-ribose 1-phosphate: step 1/6. Functionally, catalyzes the interconversion of methylthioribose-1-phosphate (MTR-1-P) into methylthioribulose-1-phosphate (MTRu-1-P). The chain is Methylthioribose-1-phosphate isomerase (mri1) from Xenopus tropicalis (Western clawed frog).